The following is a 124-amino-acid chain: Ribonuclease pancreatic (124 aa).

A compositionally biased stretch (basic and acidic residues) spans 1–13; that stretch reads KESAAAKFERQHM. The interval 1–24 is disordered; it reads KESAAAKFERQHMDSSTSSASSSN. Residues lysine 7 and arginine 10 each contribute to the substrate site. The Proton acceptor role is filled by histidine 12. Intrachain disulfides connect cysteine 26/cysteine 84, cysteine 40/cysteine 95, cysteine 58/cysteine 110, and cysteine 65/cysteine 72. N-linked (GlcNAc...) asparagine; partial glycosylation is present at asparagine 34. Residues 41–45, lysine 66, and arginine 85 contribute to the substrate site; that span reads KPVNT. The active-site Proton donor is the histidine 119.

The protein belongs to the pancreatic ribonuclease family. Monomer. Interacts with and forms tight 1:1 complexes with RNH1. Dimerization of two such complexes may occur. Interaction with RNH1 inhibits this protein. In terms of tissue distribution, pancreas.

Its subcellular location is the secreted. The catalysed reaction is an [RNA] containing cytidine + H2O = an [RNA]-3'-cytidine-3'-phosphate + a 5'-hydroxy-ribonucleotide-3'-[RNA].. It catalyses the reaction an [RNA] containing uridine + H2O = an [RNA]-3'-uridine-3'-phosphate + a 5'-hydroxy-ribonucleotide-3'-[RNA].. Endonuclease that catalyzes the cleavage of RNA on the 3' side of pyrimidine nucleotides. Acts on single-stranded and double-stranded RNA. In Aepyceros melampus (Impala), this protein is Ribonuclease pancreatic (RNASE1).